Here is a 362-residue protein sequence, read N- to C-terminus: Putative glutamate--cysteine ligase 2-1 (362 aa).

It belongs to the glutamate--cysteine ligase type 2 family. YbdK subfamily.

It catalyses the reaction L-cysteine + L-glutamate + ATP = gamma-L-glutamyl-L-cysteine + ADP + phosphate + H(+). Its function is as follows. ATP-dependent carboxylate-amine ligase which exhibits weak glutamate--cysteine ligase activity. This is Putative glutamate--cysteine ligase 2-1 from Streptomyces avermitilis (strain ATCC 31267 / DSM 46492 / JCM 5070 / NBRC 14893 / NCIMB 12804 / NRRL 8165 / MA-4680).